The primary structure comprises 185 residues: Ribosome maturation factor RimM (185 aa).

Positions 103–177 constitute a PRC barrel domain; that stretch reads SEEYYWYEIL…SIIVKKIEWY (75 aa).

The protein belongs to the RimM family. Binds ribosomal protein uS19.

The protein resides in the cytoplasm. Its function is as follows. An accessory protein needed during the final step in the assembly of 30S ribosomal subunit, possibly for assembly of the head region. Essential for efficient processing of 16S rRNA. May be needed both before and after RbfA during the maturation of 16S rRNA. It has affinity for free ribosomal 30S subunits but not for 70S ribosomes. In Petrotoga mobilis (strain DSM 10674 / SJ95), this protein is Ribosome maturation factor RimM.